The chain runs to 313 residues: tRNA dimethylallyltransferase (313 aa).

17-24 (GPTASGKT) contacts ATP. 19–24 (TASGKT) contributes to the substrate binding site. Interaction with substrate tRNA regions lie at residues 42-45 (DSAL), 166-170 (QRLSR), and 247-252 (RCVGYR).

The protein belongs to the IPP transferase family. As to quaternary structure, monomer. It depends on Mg(2+) as a cofactor.

The catalysed reaction is adenosine(37) in tRNA + dimethylallyl diphosphate = N(6)-dimethylallyladenosine(37) in tRNA + diphosphate. In terms of biological role, catalyzes the transfer of a dimethylallyl group onto the adenine at position 37 in tRNAs that read codons beginning with uridine, leading to the formation of N6-(dimethylallyl)adenosine (i(6)A). The polypeptide is tRNA dimethylallyltransferase (Yersinia pseudotuberculosis serotype O:1b (strain IP 31758)).